The primary structure comprises 132 residues: Cytochrome B5 isoform C (132 aa).

In terms of domain architecture, Cytochrome b5 heme-binding spans 2 to 78 (ANLISFHDVA…MKKYCIGDVD (77 aa)). Positions 37 and 61 each coordinate heme. A helical transmembrane segment spans residues 110–129 (LLIYLIPLLILGVAFALRFY).

This sequence belongs to the cytochrome b5 family. As to quaternary structure, interacts with CER1, BI-1, FAH1 and FAH2.

The protein resides in the endoplasmic reticulum membrane. In terms of biological role, membrane bound hemoprotein which function as an electron carrier for several membrane bound oxygenases, including fatty acid desaturases. This chain is Cytochrome B5 isoform C, found in Arabidopsis thaliana (Mouse-ear cress).